Here is a 481-residue protein sequence, read N- to C-terminus: MVGVTSEPRTLAEKVWAAHVVRSAEGEPDLLFIDLHLLHEVTSPQAFDGLRLAGRRVRRPDLTIATEDHNTPTGYADPSFRSRRGDLLTITDPTSRTQIETLRRNCAEFGVRLHPLGDKNQGIVHVIGPQLGLTQPGMTIVCGDSHTATHGAFGALAFGIGTSEVEHVLATQTLPQARPRTMAVNVVGDLAPGVTAKDLVLALIAQVGTGGGRGHVVEYRGEAIRKLSMEGRMTIANMSIEWGAKAGMIAPDETTFDYLRGRPNAPAGTDWEAAVAYWRTLTTDADATFDAEVTLDASRITPFVTWGTNPGQGAPLDASVPHPDELATEPERAAARRALEYMDLAPGTALRDLAVDVVFVGSCTNGRIEDLRAAADVLRGHRVAQGVRMLVVPGSAVVRESAEAEGLDKIFTEAGAEWRFAGCSMCLGMNPDTLLPGQRAASTSNRNFEGRQGRGGRTHLVSPPVAAATAVTGRLASPADL.

Positions 363, 423, and 426 each coordinate [4Fe-4S] cluster. The segment at 437–463 (GQRAASTSNRNFEGRQGRGGRTHLVSP) is disordered.

This sequence belongs to the aconitase/IPM isomerase family. LeuC type 1 subfamily. Heterodimer of LeuC and LeuD. [4Fe-4S] cluster serves as cofactor.

It catalyses the reaction (2R,3S)-3-isopropylmalate = (2S)-2-isopropylmalate. It functions in the pathway amino-acid biosynthesis; L-leucine biosynthesis; L-leucine from 3-methyl-2-oxobutanoate: step 2/4. Its function is as follows. Catalyzes the isomerization between 2-isopropylmalate and 3-isopropylmalate, via the formation of 2-isopropylmaleate. This chain is 3-isopropylmalate dehydratase large subunit, found in Salinispora arenicola (strain CNS-205).